The primary structure comprises 540 residues: Glucose-6-phosphate isomerase (540 aa).

The active-site Proton donor is Glu350. Active-site residues include His381 and Lys503.

The protein belongs to the GPI family.

Its subcellular location is the cytoplasm. It catalyses the reaction alpha-D-glucose 6-phosphate = beta-D-fructose 6-phosphate. The protein operates within carbohydrate biosynthesis; gluconeogenesis. It participates in carbohydrate degradation; glycolysis; D-glyceraldehyde 3-phosphate and glycerone phosphate from D-glucose: step 2/4. Its function is as follows. Catalyzes the reversible isomerization of glucose-6-phosphate to fructose-6-phosphate. The chain is Glucose-6-phosphate isomerase from Burkholderia multivorans (strain ATCC 17616 / 249).